Consider the following 362-residue polypeptide: Probable S-adenosylmethionine-dependent methyltransferase At5g37990 (362 aa).

Tyr19, Cys66, Asn71, Asp107, Ser136, and Phe137 together coordinate S-adenosyl-L-homocysteine. The Mg(2+) site is built by Asn175, Glu261, and Phe263.

This sequence belongs to the methyltransferase superfamily. Type-7 methyltransferase family. In terms of assembly, homodimer. Mg(2+) is required as a cofactor.

The chain is Probable S-adenosylmethionine-dependent methyltransferase At5g37990 from Arabidopsis thaliana (Mouse-ear cress).